Here is a 154-residue protein sequence, read N- to C-terminus: Cyanate hydratase (154 aa).

Active-site residues include Arg100, Glu103, and Ser126.

This sequence belongs to the cyanase family.

It carries out the reaction cyanate + hydrogencarbonate + 3 H(+) = NH4(+) + 2 CO2. Functionally, catalyzes the reaction of cyanate with bicarbonate to produce ammonia and carbon dioxide. In Aspergillus terreus (strain NIH 2624 / FGSC A1156), this protein is Cyanate hydratase.